Consider the following 142-residue polypeptide: Large ribosomal subunit protein uL11 (142 aa).

The protein belongs to the universal ribosomal protein uL11 family. As to quaternary structure, part of the ribosomal stalk of the 50S ribosomal subunit. Interacts with L10 and the large rRNA to form the base of the stalk. L10 forms an elongated spine to which L12 dimers bind in a sequential fashion forming a multimeric L10(L12)X complex. In terms of processing, one or more lysine residues are methylated.

Its function is as follows. Forms part of the ribosomal stalk which helps the ribosome interact with GTP-bound translation factors. The polypeptide is Large ribosomal subunit protein uL11 (Akkermansia muciniphila (strain ATCC BAA-835 / DSM 22959 / JCM 33894 / BCRC 81048 / CCUG 64013 / CIP 107961 / Muc)).